A 479-amino-acid chain; its full sequence is Probable periplasmic serine endoprotease DegP-like (479 aa).

The signal sequence occupies residues 1 to 27 (MSIPRLKSYLSMFAAVLMLGQVLSAQA). Residues His117, Asp147, and Ser220 each act as charge relay system in the active site. Substrate-binding positions include 218–220 (GNS) and 275–279 (LGVVI). PDZ domains are found at residues 264 to 355 (LKKD…IRNG) and 361 to 468 (DVTI…LRQG). The interval 368-395 (PDDDADIGTGTGADGSAERSSNRLGVSV) is disordered.

This sequence belongs to the peptidase S1C family.

The protein resides in the periplasm. The enzyme catalyses Acts on substrates that are at least partially unfolded. The cleavage site P1 residue is normally between a pair of hydrophobic residues, such as Val-|-Val.. Might be efficient in the degradation of transiently denatured and unfolded proteins which accumulate in the periplasm following stress conditions. This Pseudomonas putida (strain W619) protein is Probable periplasmic serine endoprotease DegP-like.